A 448-amino-acid polypeptide reads, in one-letter code: Exodeoxyribonuclease 7 large subunit (448 aa).

The protein belongs to the XseA family. As to quaternary structure, heterooligomer composed of large and small subunits.

The protein resides in the cytoplasm. The catalysed reaction is Exonucleolytic cleavage in either 5'- to 3'- or 3'- to 5'-direction to yield nucleoside 5'-phosphates.. Its function is as follows. Bidirectionally degrades single-stranded DNA into large acid-insoluble oligonucleotides, which are then degraded further into small acid-soluble oligonucleotides. The sequence is that of Exodeoxyribonuclease 7 large subunit from Shewanella baltica (strain OS195).